The sequence spans 310 residues: 300 kDa antigen AG231 (310 aa).

Positions Val1–Cys23 are 4 X 6 AA tandem repeats of V-V-T-G-S-C. Positions Val29–His106 are 13 X 6 AA tandem repeats of V-V-[TI]-[QE]-E-[PH]. Residues Val53–Val101 show a composition bias toward low complexity. Positions Val53 to Lys310 are disordered. 2 stretches are compositionally biased toward basic and acidic residues: residues Val103 to Glu114 and Asn147 to Ser160. The 45 AA repeat 1 repeat unit spans residues Ile107–Lys152. Polar residues predominate over residues Thr176–Ile190. The segment at Val188–His265 is 13 X 6 AA approximate tandem repeats. Over residues Gln191–Pro235 the composition is skewed to low complexity. Residues Ile236–Gln263 show a composition bias toward polar residues. Residues Glu264–Glu273 show a composition bias toward basic and acidic residues. The stretch at Ala266–Lys310 is one 45 AA repeat 2 repeat.

The chain is 300 kDa antigen AG231 (FIRA) from Plasmodium falciparum (isolate FC27 / Papua New Guinea).